The following is a 264-amino-acid chain: Small ribosomal subunit protein eS1 (264 aa).

Lysine 34 carries the post-translational modification N6-acetyllysine; alternate. A Glycyl lysine isopeptide (Lys-Gly) (interchain with G-Cter in SUMO2); alternate cross-link involves residue lysine 34. Lysine 56 carries the N6-acetyllysine modification. ADP-ribosyltyrosine is present on tyrosine 155. A disordered region spans residues 233–264 (GEGSSSGKATGDETGAKVERADGYEPPVQESV). Residues serine 236 and serine 237 each carry the phosphoserine modification. A compositionally biased stretch (basic and acidic residues) spans 242-255 (TGDETGAKVERADG). Lysine 249 bears the N6-acetyllysine; alternate mark. Lysine 249 participates in a covalent cross-link: Glycyl lysine isopeptide (Lys-Gly) (interchain with G-Cter in SUMO2); alternate. Position 256 is a phosphotyrosine (tyrosine 256). Serine 263 bears the Phosphoserine mark.

Belongs to the eukaryotic ribosomal protein eS1 family. As to quaternary structure, component of the small ribosomal subunit. Mature ribosomes consist of a small (40S) and a large (60S) subunit. The 40S subunit contains about 33 different proteins and 1 molecule of RNA (18S). The 60S subunit contains about 49 different proteins and 3 molecules of RNA (28S, 5.8S and 5S). Part of the small subunit (SSU) processome, composed of more than 70 proteins and the RNA chaperone small nucleolar RNA (snoRNA) U3. ADP-ribosylated at Tyr-155 by PARP1 in presence of HPF1.

The protein localises to the cytoplasm. It is found in the nucleus. It localises to the nucleolus. In terms of biological role, component of the small ribosomal subunit. The ribosome is a large ribonucleoprotein complex responsible for the synthesis of proteins in the cell. Part of the small subunit (SSU) processome, first precursor of the small eukaryotic ribosomal subunit. During the assembly of the SSU processome in the nucleolus, many ribosome biogenesis factors, an RNA chaperone and ribosomal proteins associate with the nascent pre-rRNA and work in concert to generate RNA folding, modifications, rearrangements and cleavage as well as targeted degradation of pre-ribosomal RNA by the RNA exosome. May play a role during erythropoiesis. This is Small ribosomal subunit protein eS1 from Callithrix jacchus (White-tufted-ear marmoset).